We begin with the raw amino-acid sequence, 136 residues long: Galectin-7 (136 aa).

In terms of domain architecture, Galectin spans 6 to 136; sequence HKTSLPQGVR…DVQLHSLNIF (131 aa). An a beta-D-galactoside-binding site is contributed by 70-76; it reads WGREERG.

In terms of assembly, monomer.

It localises to the cytoplasm. Its subcellular location is the nucleus. The protein resides in the secreted. Could be involved in cell-cell and/or cell-matrix interactions necessary for normal growth control. Pro-apoptotic protein that functions intracellularly upstream of JNK activation and cytochrome c release. This Mus musculus (Mouse) protein is Galectin-7 (Lgals7).